Here is a 426-residue protein sequence, read N- to C-terminus: 3-phosphoshikimate 1-carboxyvinyltransferase (426 aa).

Lys-20, Ser-21, and Arg-25 together coordinate 3-phosphoshikimate. Lys-20 provides a ligand contact to phosphoenolpyruvate. Phosphoenolpyruvate-binding residues include Gly-92 and Arg-120. Ser-166, Gln-168, Asp-312, and Lys-339 together coordinate 3-phosphoshikimate. Gln-168 is a phosphoenolpyruvate binding site. Asp-312 acts as the Proton acceptor in catalysis. Residue Arg-385 coordinates phosphoenolpyruvate.

The protein belongs to the EPSP synthase family. In terms of assembly, monomer.

The protein resides in the cytoplasm. The enzyme catalyses 3-phosphoshikimate + phosphoenolpyruvate = 5-O-(1-carboxyvinyl)-3-phosphoshikimate + phosphate. It functions in the pathway metabolic intermediate biosynthesis; chorismate biosynthesis; chorismate from D-erythrose 4-phosphate and phosphoenolpyruvate: step 6/7. Its function is as follows. Catalyzes the transfer of the enolpyruvyl moiety of phosphoenolpyruvate (PEP) to the 5-hydroxyl of shikimate-3-phosphate (S3P) to produce enolpyruvyl shikimate-3-phosphate and inorganic phosphate. This Streptococcus suis (strain 98HAH33) protein is 3-phosphoshikimate 1-carboxyvinyltransferase.